The sequence spans 507 residues: ATP synthase subunit alpha, chloroplastic (507 aa).

169–176 provides a ligand contact to ATP; it reads IGDRQTGK.

This sequence belongs to the ATPase alpha/beta chains family. As to quaternary structure, F-type ATPases have 2 components, CF(1) - the catalytic core - and CF(0) - the membrane proton channel. CF(1) has five subunits: alpha(3), beta(3), gamma(1), delta(1), epsilon(1). CF(0) has four main subunits: a, b, b' and c.

Its subcellular location is the plastid. The protein resides in the chloroplast thylakoid membrane. The catalysed reaction is ATP + H2O + 4 H(+)(in) = ADP + phosphate + 5 H(+)(out). In terms of biological role, produces ATP from ADP in the presence of a proton gradient across the membrane. The alpha chain is a regulatory subunit. This Saccharum hybrid (Sugarcane) protein is ATP synthase subunit alpha, chloroplastic.